Consider the following 92-residue polypeptide: Small ribosomal subunit protein uS19 (92 aa).

Belongs to the universal ribosomal protein uS19 family.

Functionally, protein S19 forms a complex with S13 that binds strongly to the 16S ribosomal RNA. The protein is Small ribosomal subunit protein uS19 of Gloeobacter violaceus (strain ATCC 29082 / PCC 7421).